A 329-amino-acid chain; its full sequence is Quinone oxidoreductase (329 aa).

Alanine 2 is modified (N-acetylalanine). Position 23 is an N6-acetyllysine (lysine 23). NADP(+)-binding positions include tyrosine 53, 158–161 (SGGV), glycine 181, histidine 200, asparagine 229, 246–249 (VGSR), and 269–271 (VTL). Serine 248 carries the phosphoserine modification. Residue lysine 296 is modified to N6-succinyllysine.

It belongs to the zinc-containing alcohol dehydrogenase family. Quinone oxidoreductase subfamily. In terms of assembly, homotetramer. Only very low amounts in the lens.

The protein resides in the cytoplasm. It carries out the reaction 2 a quinone + NADPH + H(+) = 2 a 1,4-benzosemiquinone + NADP(+). Does not have alcohol dehydrogenase activity. Binds NADP and acts through a one-electron transfer process. Orthoquinones, such as 1,2-naphthoquinone or 9,10-phenanthrenequinone, are the best substrates (in vitro). May act in the detoxification of xenobiotics. Interacts with (AU)-rich elements (ARE) in the 3'-UTR of target mRNA species. Enhances the stability of mRNA coding for BCL2. NADPH binding interferes with mRNA binding. The protein is Quinone oxidoreductase (CRYZ) of Homo sapiens (Human).